A 460-amino-acid chain; its full sequence is EPD1-interacting receptor-like cytoplasmic serine/threonine-protein kinase 5D (460 aa).

One can recognise a Protein kinase domain in the interval 83–364 (FSSANFLGEG…DVVNILEPLL (282 aa)). ATP-binding positions include 89-97 (LGEGGFGPV) and lysine 118. Phosphotyrosine is present on residues tyrosine 163 and tyrosine 165. The Proton acceptor role is filled by aspartate 213.

The protein belongs to the protein kinase superfamily. Ser/Thr protein kinase family. As to quaternary structure, interacts with the V.dahliae elicitor EPD1 (AC G2WWH6). In terms of processing, phosphorylated at Tyr-163 and Tyr-165 in the presence of pathogen-associated molecular patterns (PAMPs); this triggers the expression of pathogenesis-related genes. As to expression, mostly expressed in roots and, to a lesser extent, in leaves.

Its subcellular location is the cell membrane. The enzyme catalyses L-seryl-[protein] + ATP = O-phospho-L-seryl-[protein] + ADP + H(+). The catalysed reaction is L-threonyl-[protein] + ATP = O-phospho-L-threonyl-[protein] + ADP + H(+). Its function is as follows. Required for pathogen-associated molecular pattern (PAMP, e.g. chitin and flg22)-triggered immunity (PTI) involving reactive oxygen species (ROS) accumulation and triggering plant defense, including defense-related gene expression (e.g. PR1 and LOX). Ensures specific recognition of the EPD1 effector of Verticillium dahliae, resulting in a hypersensitive response known as effector-triggered immunity (ETI), characterized by the activation of programmed cell death to limit infection by the pathogen. Priming plants with the incompatible pathogen V.dahliae leads to an increased resistance to compatible pathogens, as a result of systemic acquired resistance (SAR). The protein is EPD1-interacting receptor-like cytoplasmic serine/threonine-protein kinase 5D of Gossypium barbadense (Sea Island cotton).